The primary structure comprises 332 residues: Methionine import ATP-binding protein MetN (332 aa).

Residues 2 to 239 (ITFQDVSKTY…PASDTARRFV (238 aa)) form the ABC transporter domain. 36–43 (GASGAGKS) is an ATP binding site.

It belongs to the ABC transporter superfamily. Methionine importer (TC 3.A.1.24) family. The complex is composed of two ATP-binding proteins (MetN), two transmembrane proteins (MetI) and a solute-binding protein (MetQ).

It localises to the cell inner membrane. The catalysed reaction is L-methionine(out) + ATP + H2O = L-methionine(in) + ADP + phosphate + H(+). It catalyses the reaction D-methionine(out) + ATP + H2O = D-methionine(in) + ADP + phosphate + H(+). Part of the ABC transporter complex MetNIQ involved in methionine import. Responsible for energy coupling to the transport system. This chain is Methionine import ATP-binding protein MetN, found in Caulobacter vibrioides (strain ATCC 19089 / CIP 103742 / CB 15) (Caulobacter crescentus).